We begin with the raw amino-acid sequence, 95 residues long: Co-chaperonin GroES (95 aa).

A disordered region spans residues 36-55 (QEGEVVAVGSGKTLDDGSKV).

The protein belongs to the GroES chaperonin family. Heptamer of 7 subunits arranged in a ring. Interacts with the chaperonin GroEL.

It is found in the cytoplasm. In terms of biological role, together with the chaperonin GroEL, plays an essential role in assisting protein folding. The GroEL-GroES system forms a nano-cage that allows encapsulation of the non-native substrate proteins and provides a physical environment optimized to promote and accelerate protein folding. GroES binds to the apical surface of the GroEL ring, thereby capping the opening of the GroEL channel. The sequence is that of Co-chaperonin GroES from Natranaerobius thermophilus (strain ATCC BAA-1301 / DSM 18059 / JW/NM-WN-LF).